The following is a 248-amino-acid chain: 1-(5-phosphoribosyl)-5-[(5-phosphoribosylamino)methylideneamino] imidazole-4-carboxamide isomerase (248 aa).

The active-site Proton acceptor is Asp-7. Residue Asp-131 is the Proton donor of the active site.

Belongs to the HisA/HisF family.

It localises to the cytoplasm. It carries out the reaction 1-(5-phospho-beta-D-ribosyl)-5-[(5-phospho-beta-D-ribosylamino)methylideneamino]imidazole-4-carboxamide = 5-[(5-phospho-1-deoxy-D-ribulos-1-ylimino)methylamino]-1-(5-phospho-beta-D-ribosyl)imidazole-4-carboxamide. It participates in amino-acid biosynthesis; L-histidine biosynthesis; L-histidine from 5-phospho-alpha-D-ribose 1-diphosphate: step 4/9. The sequence is that of 1-(5-phosphoribosyl)-5-[(5-phosphoribosylamino)methylideneamino] imidazole-4-carboxamide isomerase from Baumannia cicadellinicola subsp. Homalodisca coagulata.